The chain runs to 425 residues: Histidine--tRNA ligase (425 aa).

It belongs to the class-II aminoacyl-tRNA synthetase family. Homodimer.

The protein resides in the cytoplasm. It catalyses the reaction tRNA(His) + L-histidine + ATP = L-histidyl-tRNA(His) + AMP + diphosphate + H(+). This Shewanella sp. (strain ANA-3) protein is Histidine--tRNA ligase.